The sequence spans 205 residues: UPF0637 protein OB1420 (205 aa).

This sequence belongs to the UPF0637 family.

This Oceanobacillus iheyensis (strain DSM 14371 / CIP 107618 / JCM 11309 / KCTC 3954 / HTE831) protein is UPF0637 protein OB1420.